The sequence spans 185 residues: MISVNDFRTGLTIEVDGGIWRVVDFQHVKPGKGAAFVRSKLRNLRTGAIQEKTFRAGEKVAKAQIETKTMQYLYANGDQHVFMDTSSYEQLELSETQIKDELKYLLENMSVQIVMYGAETLGVELPNTVELEVVETEPGIKGDTTSGGSKPAKTETGLIVNVPFFVNQGDKLVINTSDGSYVSRA.

Belongs to the elongation factor P family.

It localises to the cytoplasm. Its pathway is protein biosynthesis; polypeptide chain elongation. Functionally, involved in peptide bond synthesis. Stimulates efficient translation and peptide-bond synthesis on native or reconstituted 70S ribosomes in vitro. Probably functions indirectly by altering the affinity of the ribosome for aminoacyl-tRNA, thus increasing their reactivity as acceptors for peptidyl transferase. The protein is Elongation factor P of Bacillus pumilus (strain SAFR-032).